Here is a 103-residue protein sequence, read N- to C-terminus: Co-chaperonin GroES (103 aa).

It belongs to the GroES chaperonin family. Heptamer of 7 subunits arranged in a ring. Interacts with the chaperonin GroEL.

The protein resides in the cytoplasm. Its function is as follows. Together with the chaperonin GroEL, plays an essential role in assisting protein folding. The GroEL-GroES system forms a nano-cage that allows encapsulation of the non-native substrate proteins and provides a physical environment optimized to promote and accelerate protein folding. GroES binds to the apical surface of the GroEL ring, thereby capping the opening of the GroEL channel. The chain is Co-chaperonin GroES from Microcystis aeruginosa (strain NIES-843 / IAM M-2473).